A 163-amino-acid polypeptide reads, in one-letter code: MRAVIQKTVGAKVDVVSEAGTETCGKIDGGFVVLLGVTHSDTEKDARYIADKIAHLRVFEDEAGKLNLSLKDVGGAVLLVSQFTLYADAASGRRPSFSQAAPAEQAQRLYLRTAELLRGHGIHVETGRFRTHMQVSLCNDGPVTILLDSFMTRISPKMKVVPD.

A Gly-cisPro motif, important for rejection of L-amino acids motif is present at residues G141–P142.

Belongs to the DTD family. In terms of assembly, homodimer.

The protein resides in the cytoplasm. It carries out the reaction glycyl-tRNA(Ala) + H2O = tRNA(Ala) + glycine + H(+). The enzyme catalyses a D-aminoacyl-tRNA + H2O = a tRNA + a D-alpha-amino acid + H(+). An aminoacyl-tRNA editing enzyme that deacylates mischarged D-aminoacyl-tRNAs. Also deacylates mischarged glycyl-tRNA(Ala), protecting cells against glycine mischarging by AlaRS. Acts via tRNA-based rather than protein-based catalysis; rejects L-amino acids rather than detecting D-amino acids in the active site. By recycling D-aminoacyl-tRNA to D-amino acids and free tRNA molecules, this enzyme counteracts the toxicity associated with the formation of D-aminoacyl-tRNA entities in vivo and helps enforce protein L-homochirality. In Neisseria gonorrhoeae (strain ATCC 700825 / FA 1090), this protein is D-aminoacyl-tRNA deacylase.